A 294-amino-acid chain; its full sequence is tRNA pseudouridine synthase B (294 aa).

Aspartate 39 functions as the Nucleophile in the catalytic mechanism.

Belongs to the pseudouridine synthase TruB family. Type 1 subfamily.

The catalysed reaction is uridine(55) in tRNA = pseudouridine(55) in tRNA. In terms of biological role, responsible for synthesis of pseudouridine from uracil-55 in the psi GC loop of transfer RNAs. The polypeptide is tRNA pseudouridine synthase B (Streptococcus pyogenes serotype M3 (strain ATCC BAA-595 / MGAS315)).